The chain runs to 865 residues: cGMP-specific 3',5'-cyclic phosphodiesterase (865 aa).

The residue at position 92 (serine 92) is a Phosphoserine. GAF domains lie at 154–304 (DVTA…GIVL) and 336–493 (SLEV…GLGI). Positions 526-850 (ETRELQALSA…QKWQALAEQQ (325 aa)) constitute a PDEase domain. Histidine 603 functions as the Proton donor in the catalytic mechanism. Zn(2+) is bound by residues histidine 607, histidine 643, aspartate 644, and aspartate 754. Aspartate 644 serves as a coordination point for Mg(2+). Glutamine 807 is a 3',5'-cyclic GMP binding site.

This sequence belongs to the cyclic nucleotide phosphodiesterase family. Zn(2+) is required as a cofactor. Mg(2+) serves as cofactor. Post-translationally, phosphorylation is regulated by binding of cGMP to the two allosteric sites. Phosphorylation by PRKG1 leads to its activation.

The enzyme catalyses 3',5'-cyclic GMP + H2O = GMP + H(+). Its pathway is purine metabolism; 3',5'-cyclic GMP degradation; GMP from 3',5'-cyclic GMP: step 1/1. In terms of biological role, plays a role in signal transduction by regulating the intracellular concentration of cyclic nucleotides. This phosphodiesterase catalyzes the specific hydrolysis of cGMP to 5'-GMP. Specifically regulates nitric-oxide-generated cGMP. This is cGMP-specific 3',5'-cyclic phosphodiesterase (Pde5a) from Mus musculus (Mouse).